A 149-amino-acid chain; its full sequence is Nucleoside diphosphate kinase (149 aa).

Residues Lys-9, Phe-57, Arg-85, Thr-91, Arg-102, and Asn-112 each contribute to the ATP site. The Pros-phosphohistidine intermediate role is filled by His-115.

Belongs to the NDK family. As to quaternary structure, homotetramer. Mg(2+) serves as cofactor.

It is found in the cytoplasm. The catalysed reaction is a 2'-deoxyribonucleoside 5'-diphosphate + ATP = a 2'-deoxyribonucleoside 5'-triphosphate + ADP. It catalyses the reaction a ribonucleoside 5'-diphosphate + ATP = a ribonucleoside 5'-triphosphate + ADP. Major role in the synthesis of nucleoside triphosphates other than ATP. The ATP gamma phosphate is transferred to the NDP beta phosphate via a ping-pong mechanism, using a phosphorylated active-site intermediate. The sequence is that of Nucleoside diphosphate kinase from Staphylococcus aureus (strain Mu3 / ATCC 700698).